Here is a 438-residue protein sequence, read N- to C-terminus: Coenzyme A disulfide reductase (438 aa).

Position 8 to 33 (8 to 33 (GAVAGGATCASQIRRLDKESDIIIFE)) interacts with FAD. T15, Q19, R22, S39, and N42 together coordinate substrate. C43 serves as the catalytic Nucleophile. Residue C43 is the Redox-active of the active site. K71 provides a ligand contact to substrate. 151 to 166 (VLVIGAGYVSLEVLEN) is a binding site for NADP(+). 267–277 (TNVPNIYAIGD) provides a ligand contact to FAD. H299 provides a ligand contact to substrate. FAD is bound at residue Y419. A substrate-binding site is contributed by K427.

The protein belongs to the class-III pyridine nucleotide-disulfide oxidoreductase family. In terms of assembly, homodimer. The cofactor is FAD.

The catalysed reaction is NADP(+) + 2 CoA = CoA-disulfide + NADPH + H(+). Catalyzes specifically the NADPH-dependent reduction of coenzyme A disulfide. In Staphylococcus aureus (strain Mu3 / ATCC 700698), this protein is Coenzyme A disulfide reductase.